A 78-amino-acid polypeptide reads, in one-letter code: Conotoxin ba1890.8 (78 aa).

The first 22 residues, 1–22 (MKTSGRLLFLCLAVGLLLESQA), serve as a signal peptide directing secretion. Residues 23–61 (HPIADAEDATRNVGSDGTSVELSEILERGQDSSAEKGQR) constitute a propeptide that is removed on maturation. Positions 25-78 (IADAEDATRNVGSDGTSVELSEILERGQDSSAEKGQRQNDHDVDESGHDIPFPS) are disordered. The span at 34 to 43 (NVGSDGTSVE) shows a compositional bias: polar residues. Basic and acidic residues predominate over residues 47 to 72 (ILERGQDSSAEKGQRQNDHDVDESGH). Gln62 is subject to Pyrrolidone carboxylic acid.

Belongs to the conotoxin H superfamily. In terms of tissue distribution, expressed by the venom duct.

The protein resides in the secreted. Probable toxin. The chain is Conotoxin ba1890.8 from Conus bayani (Bayan's cone).